We begin with the raw amino-acid sequence, 436 residues long: Chromosomal replication initiator protein DnaA (436 aa).

The interval 1-69 is domain I, interacts with DnaA modulators; the sequence is MLADEVIELL…ANIFEVKTGI (69 aa). The segment at 69–99 is domain II; that stretch reads IKPVISITTQKNRVSIKAKDIDVKQIRTQSS. The domain III, AAA+ region stretch occupies residues 100 to 314; it reads LLNPSYTFES…SAIININAFA (215 aa). Positions 144, 146, 147, and 148 each coordinate ATP. Residues 315–436 form a domain IV, binds dsDNA region; sequence NIMRQEITLE…ELKNKITSKE (122 aa).

The protein belongs to the DnaA family. Oligomerizes as a right-handed, spiral filament on DNA at oriC.

It localises to the cytoplasm. In terms of biological role, plays an essential role in the initiation and regulation of chromosomal replication. ATP-DnaA binds to the origin of replication (oriC) to initiate formation of the DNA replication initiation complex once per cell cycle. Binds the DnaA box (a 9 base pair repeat at the origin) and separates the double-stranded (ds)DNA. Forms a right-handed helical filament on oriC DNA; dsDNA binds to the exterior of the filament while single-stranded (ss)DNA is stabiized in the filament's interior. The ATP-DnaA-oriC complex binds and stabilizes one strand of the AT-rich DNA unwinding element (DUE), permitting loading of DNA polymerase. After initiation quickly degrades to an ADP-DnaA complex that is not apt for DNA replication. Binds acidic phospholipids. This is Chromosomal replication initiator protein DnaA from Campylobacter fetus subsp. fetus (strain 82-40).